The chain runs to 366 residues: Erythronate-4-phosphate dehydrogenase (366 aa).

Substrate is bound by residues S46 and T67. 2 residues coordinate NAD(+): D147 and T175. R208 is a catalytic residue. D228 contributes to the NAD(+) binding site. E233 is a catalytic residue. Residue H250 is the Proton donor of the active site. NAD(+) is bound at residue G253. Y254 is a binding site for substrate.

It belongs to the D-isomer specific 2-hydroxyacid dehydrogenase family. PdxB subfamily. In terms of assembly, homodimer.

The protein localises to the cytoplasm. The enzyme catalyses 4-phospho-D-erythronate + NAD(+) = (R)-3-hydroxy-2-oxo-4-phosphooxybutanoate + NADH + H(+). It functions in the pathway cofactor biosynthesis; pyridoxine 5'-phosphate biosynthesis; pyridoxine 5'-phosphate from D-erythrose 4-phosphate: step 2/5. In terms of biological role, catalyzes the oxidation of erythronate-4-phosphate to 3-hydroxy-2-oxo-4-phosphonooxybutanoate. In Coxiella burnetii (strain Dugway 5J108-111), this protein is Erythronate-4-phosphate dehydrogenase.